The following is a 1105-amino-acid chain: AP-3 complex subunit beta-1 (1105 aa).

2 disordered regions span residues methionine 1–serine 26 and lysine 271–tyrosine 292. Phosphoserine occurs at positions 276 and 610. Positions lysine 668 to serine 824 are disordered. Acidic residues predominate over residues glutamate 679–proline 704. Low complexity-rich tracts occupy residues serine 705–threonine 722 and aspartate 730–serine 741. Positions valine 750–arginine 759 are enriched in basic residues. The segment covering lysine 760 to lysine 774 has biased composition (basic and acidic residues). A phosphoserine mark is found at serine 761 and serine 763. A compositionally biased stretch (low complexity) spans alanine 775–aspartate 788. Residues serine 789–serine 799 are compositionally biased toward acidic residues. The span at alanine 811 to serine 824 shows a compositional bias: basic and acidic residues.

This sequence belongs to the adaptor complexes large subunit family. In terms of assembly, adaptor protein complex 3 (AP-3) is a heterotetramer composed of two large adaptins (delta-type subunit AP3D1 and beta-type subunit AP3B1 or AP3B2), a medium adaptin (mu-type subunit AP3M1 or AP3M2) and a small adaptin (sigma-type subunit APS1 or AP3S2). AP-3 associates with the BLOC-1 complex. Interacts with KIF3A; interaction is direct; interaction is impaired by pyrophosphorylation of AP3B1. Post-translationally, phosphorylated on serine residues. In terms of processing, pyrophosphorylated by 5-diphosphoinositol pentakisphosphate (5-IP7). Pyrophosphorylation impairs interaction with KIF3A. Serine pyrophosphorylation is achieved by Mg(2+)-dependent, but enzyme independent transfer of a beta-phosphate from a inositol pyrophosphate to a pre-phosphorylated serine residue. As to expression, ubiquitously expressed.

It localises to the cytoplasmic vesicle. The protein resides in the clathrin-coated vesicle membrane. Its subcellular location is the golgi apparatus. Its function is as follows. Subunit of non-clathrin- and clathrin-associated adaptor protein complex 3 (AP-3) that plays a role in protein sorting in the late-Golgi/trans-Golgi network (TGN) and/or endosomes. The AP complexes mediate both the recruitment of clathrin to membranes and the recognition of sorting signals within the cytosolic tails of transmembrane cargo molecules. AP-3 appears to be involved in the sorting of a subset of transmembrane proteins targeted to lysosomes and lysosome-related organelles. In concert with the BLOC-1 complex, AP-3 is required to target cargos into vesicles assembled at cell bodies for delivery into neurites and nerve terminals. The chain is AP-3 complex subunit beta-1 (Ap3b1) from Mus musculus (Mouse).